Reading from the N-terminus, the 326-residue chain is Polycomb complex protein BMI-1 (326 aa).

The segment at 18–57 (CVLCGGYFIDATTIIECLHSFCKTCIVRYLETSKYCPICD) adopts an RING-type zinc-finger fold. The Nuclear localization signal signature appears at 81-95 (KLVPGLFKNEMKRRR). The segment at 162 to 182 (RYLRCPAAMTVMHLRKFLRSK) is interaction with PHC2. The interaction with E4F1 stretch occupies residues 164–228 (LRCPAAMTVM…GPLPLKYRVR (65 aa)). The disordered stretch occupies residues 236–326 (IGHQREGLSN…INGSSATSSG (91 aa)). Residues 265–278 (LPSTSSCLPSPSTP) show a composition bias toward low complexity. Residues 279–310 (VQSPHPQFPHISSTMNGTSSSPGSNHQSSFTN) show a composition bias toward polar residues. The span at 315 to 326 (SSINGSSATSSG) shows a compositional bias: low complexity.

Component of a PRC1-like complex.

The protein resides in the nucleus. The protein localises to the cytoplasm. Component of a Polycomb group (PcG) multiprotein PRC1-like complex, a complex class required to maintain the transcriptionally repressive state of many genes, including Hox genes, throughout development. PcG PRC1 complex acts via chromatin remodeling and modification of histones; it mediates monoubiquitination of histone H2A 'Lys-119', rendering chromatin heritably changed in its expressibility. In the PRC1-like complex, regulates the E3 ubiquitin-protein ligase activity of RNF2/RING2. This Gallus gallus (Chicken) protein is Polycomb complex protein BMI-1 (BMI1).